A 270-amino-acid polypeptide reads, in one-letter code: Interleukin-1 alpha (270 aa).

A propeptide spanning residues 1 to 112 (MAKVPDLFED…DTEEEIIKPR (112 aa)) is cleaved from the precursor. An N6-acetyllysine modification is found at lysine 82. Positions 82–86 (KKRRL) are nuclear localization signal (NLS). Serine 87 is modified (phosphoserine). N-linked (GlcNAc...) asparagine glycans are attached at residues asparagine 102 and asparagine 141.

Belongs to the IL-1 family. As to quaternary structure, monomer. Interacts with TMED10; the interaction mediates the translocation from the cytoplasm into the ERGIC (endoplasmic reticulum-Golgi intermediate compartment) and thereby secretion. Interacts with IL1R1. Interacts with S100A13; this interaction is the first step in the export of IL1A, followed by direct translocation of this complex across the plasma membrane. Acetylated within its nuclear localization sequence, which impacts subcellular localization. In terms of processing, proteolytic processed by CAPN1 in a calcium-dependent manner. Cleavage from 31 kDa precursor to 18 kDa biologically active molecules. Post-translationally, phosphorylated. Phosphorylation greatly enhances susceptibility to digestion and promotes the conversion of pre-IL1A alpha to the biologically active IL1A.

It is found in the nucleus. Its subcellular location is the cytoplasm. The protein localises to the secreted. Cytokine constitutively present intracellularly in nearly all resting non-hematopoietic cells that plays an important role in inflammation and bridges the innate and adaptive immune systems. After binding to its receptor IL1R1 together with its accessory protein IL1RAP, forms the high affinity interleukin-1 receptor complex. Signaling involves the recruitment of adapter molecules such as MYD88, IRAK1 or IRAK4. In turn, mediates the activation of NF-kappa-B and the three MAPK pathways p38, p42/p44 and JNK pathways. Within the cell, acts as an alarmin and cell death results in its liberation in the extracellular space after disruption of the cell membrane to induce inflammation and alert the host to injury or damage. In addition to its role as a danger signal, which occurs when the cytokine is passively released by cell necrosis, directly senses DNA damage and acts as signal for genotoxic stress without loss of cell integrity. In Sus scrofa (Pig), this protein is Interleukin-1 alpha (IL1A).